Reading from the N-terminus, the 485-residue chain is dTDP-4-amino-4,6-dideoxy-D-glucose ammonia-lyase (485 aa).

The [4Fe-4S] cluster site is built by C141, C145, and C148.

Belongs to the radical SAM superfamily. DesII family. Monomer. [4Fe-4S] cluster serves as cofactor.

The catalysed reaction is dTDP-4-amino-4,6-dideoxy-alpha-D-glucose + AH2 + S-adenosyl-L-methionine = dTDP-3-dehydro-4,6-dideoxy-alpha-D-glucose + 5'-deoxyadenosine + L-methionine + A + NH4(+) + H(+). In terms of biological role, involved in the biosynthesis of dTDP-alpha-D-desosamine, a sugar found in several bacterial macrolide antibiotics. Catalyzes the SAM-dependent deamination of dTDP-4-amino-4,6-deoxyglucose (dTDP-viosamine) to yield dTDP-3-keto-4,6-deoxyglucose. It can also catalyze the oxidative dehydrogenation of the non-physiological substrate dTDP-D-quinovose to dTDP-3-keto-6-deoxy-d-glucose. It can also deaminate dTDP-3-amino-3,6-deoxyglucose. This chain is dTDP-4-amino-4,6-dideoxy-D-glucose ammonia-lyase, found in Streptomyces venezuelae.